A 113-amino-acid polypeptide reads, in one-letter code: UPF0342 protein SpyM3_0545 (113 aa).

The protein belongs to the UPF0342 family.

The chain is UPF0342 protein SpyM3_0545 from Streptococcus pyogenes serotype M3 (strain ATCC BAA-595 / MGAS315).